An 81-amino-acid chain; its full sequence is Short neurotoxin 1 (81 aa).

The signal sequence occupies residues 1–21 (MKTLLLTLVVVTIVCLDLGYT). 4 disulfide bridges follow: cysteine 24–cysteine 43, cysteine 38–cysteine 60, cysteine 62–cysteine 73, and cysteine 74–cysteine 79.

It belongs to the three-finger toxin family. Short-chain subfamily. Type I alpha-neurotoxin sub-subfamily. In terms of tissue distribution, expressed by the venom gland.

The protein resides in the secreted. Functionally, binds to muscle nicotinic acetylcholine receptor (nAChR) and inhibit acetylcholine from binding to the receptor, thereby impairing neuromuscular transmission. In Austrelaps superbus (Lowland copperhead snake), this protein is Short neurotoxin 1.